A 271-amino-acid polypeptide reads, in one-letter code: Putative phosphoenolpyruvate synthase regulatory protein (271 aa).

Residue 152–159 (GVSRSGKT) participates in ADP binding.

Belongs to the pyruvate, phosphate/water dikinase regulatory protein family. PSRP subfamily.

The enzyme catalyses [pyruvate, water dikinase] + ADP = [pyruvate, water dikinase]-phosphate + AMP + H(+). It catalyses the reaction [pyruvate, water dikinase]-phosphate + phosphate + H(+) = [pyruvate, water dikinase] + diphosphate. Bifunctional serine/threonine kinase and phosphorylase involved in the regulation of the phosphoenolpyruvate synthase (PEPS) by catalyzing its phosphorylation/dephosphorylation. This Dichelobacter nodosus (strain VCS1703A) protein is Putative phosphoenolpyruvate synthase regulatory protein.